The chain runs to 503 residues: Activin receptor type-1-like (503 aa).

Residues Met-1–Gly-21 form the signal peptide. Over Asp-22–Gln-118 the chain is Extracellular. 3 cysteine pairs are disulfide-bonded: Cys-34–Cys-51, Cys-36–Cys-41, and Cys-46–Cys-69. A mediates specificity for BMP ligand region spans residues His-73–Leu-76. 2 disulfides stabilise this stretch: Cys-77/Cys-89 and Cys-90/Cys-95. N-linked (GlcNAc...) asparagine glycosylation occurs at Asn-98. A helical membrane pass occupies residues Leu-119–Trp-141. Over His-142–Gln-503 the chain is Cytoplasmic. A phosphoserine mark is found at Ser-155, Ser-160, and Ser-161. Residues Ser-172–Gln-201 enclose the GS domain. The region spanning Val-202 to Ile-492 is the Protein kinase domain. ATP is bound by residues Val-208–Val-216 and Lys-229. Asp-330 acts as the Proton acceptor in catalysis.

The protein belongs to the protein kinase superfamily. TKL Ser/Thr protein kinase family. TGFB receptor subfamily. As to quaternary structure, interacts with TSC22D1/TSC-22. Mg(2+) serves as cofactor. Requires Mn(2+) as cofactor.

The protein localises to the cell membrane. It catalyses the reaction L-threonyl-[receptor-protein] + ATP = O-phospho-L-threonyl-[receptor-protein] + ADP + H(+). The catalysed reaction is L-seryl-[receptor-protein] + ATP = O-phospho-L-seryl-[receptor-protein] + ADP + H(+). Type I receptor for TGF-beta family ligands BMP9/GDF2 and BMP10 and important regulator of normal blood vessel development. On ligand binding, forms a receptor complex consisting of two type II and two type I transmembrane serine/threonine kinases. Type II receptors phosphorylate and activate type I receptors which autophosphorylate, then bind and activate SMAD transcriptional regulators. May bind activin as well. This is Activin receptor type-1-like (ACVRL1) from Pongo abelii (Sumatran orangutan).